We begin with the raw amino-acid sequence, 107 residues long: UPF0060 membrane protein RPD_3084 (107 aa).

4 helical membrane passes run 5–25 (IIYV…WGWL), 31–51 (VWWL…LTLV), 59–79 (AYAS…WSVE), and 85–105 (RWDV…LWGP).

Belongs to the UPF0060 family.

The protein resides in the cell inner membrane. In Rhodopseudomonas palustris (strain BisB5), this protein is UPF0060 membrane protein RPD_3084.